The sequence spans 36 residues: Protein YibY (36 aa).

This is Protein YibY from Escherichia coli (strain K12).